Reading from the N-terminus, the 517-residue chain is Ubiquitin carboxyl-terminal hydrolase 30 (517 aa).

Topologically, residues 1-35 (MLSSRAQAARTAADKALQRFLRTGAAVRYKVMKNW) are mitochondrial intermembrane. A helical transmembrane segment spans residues 36–56 (GVIGGIAAALAAGIYVIWGPI). Residues 57 to 517 (TERKKRRKGL…QQGREYRSEE (461 aa)) lie on the Cytoplasmic side of the membrane. Residues 68-502 (PGLVNLGNTC…SAYLLFYERV (435 aa)) enclose the USP domain. Residue cysteine 77 is the Nucleophile of the active site. Glycyl lysine isopeptide (Lys-Gly) (interchain with G-Cter in ubiquitin) cross-links involve residues lysine 235 and lysine 289. Residues 364–395 (SQHGPKATESPGSALGVQDTQAAPKPGLSQPA) form a disordered region. The active-site Proton acceptor is the histidine 452.

Belongs to the peptidase C19 family. Post-translationally, ubiquitinated by parkin (PRKN) at Lys-235 and Lys-289, leading to its degradation.

The protein localises to the mitochondrion outer membrane. It carries out the reaction Thiol-dependent hydrolysis of ester, thioester, amide, peptide and isopeptide bonds formed by the C-terminal Gly of ubiquitin (a 76-residue protein attached to proteins as an intracellular targeting signal).. With respect to regulation, inhibited by the diterpenoid derivative 15-oxospiramilactone (S3). In terms of biological role, deubiquitinating enzyme tethered to the mitochondrial outer membrane that acts as a key inhibitor of mitophagy by counteracting the action of parkin (PRKN): hydrolyzes ubiquitin attached by parkin on target proteins, such as RHOT1/MIRO1 and TOMM20, thereby blocking parkin's ability to drive mitophagy. Preferentially cleaves 'Lys-6'- and 'Lys-11'-linked polyubiquitin chains, 2 types of linkage that participate in mitophagic signaling. Does not cleave efficiently polyubiquitin phosphorylated at 'Ser-65'. Acts as a negative regulator of mitochondrial fusion by mediating deubiquitination of MFN1 and MFN2. The polypeptide is Ubiquitin carboxyl-terminal hydrolase 30 (Usp30) (Rattus norvegicus (Rat)).